The following is a 2385-amino-acid chain: Neuron navigator 3 (2385 aa).

The disordered stretch occupies residues 17–38 (SKPVHTALPIPNLGTTGSQHCS). Positions 29–38 (LGTTGSQHCS) are enriched in polar residues. The region spanning 77-184 (KEDSKIYTDW…LFFSLSRYKQ (108 aa)) is the Calponin-homology (CH) domain. A disordered region spans residues 203–625 (VTHASPPSEA…LPQQQQHSHP (423 aa)). Composition is skewed to polar residues over residues 210–243 (SEAS…TSQK), 258–279 (GSSS…FNSI), and 297–316 (KGPQ…STAG). A compositionally biased stretch (low complexity) spans 318–329 (PPASAIPSPSAS). Polar residues predominate over residues 335 to 352 (KSMNVKHSATSTMLTVKQ). Composition is skewed to low complexity over residues 353–363 (SSTATSPTPSS) and 427–439 (NSGL…TNSS). Over residues 465 to 491 (PKEKEEKNRDKNKVCTEKPVKEEKDQV) the composition is skewed to basic and acidic residues. Residues 521 to 535 (IPSSSGIPKPGSKVP) are compositionally biased toward low complexity. Composition is skewed to polar residues over residues 537-548 (VKQTISPGSTAS), 557-567 (TKGSPSQSLSK), and 591-625 (ASPS…HSHP). Residues 679–707 (ETRRMRTVKNIADLRQNLEETMSSLRGTQ) adopt a coiled-coil conformation. Disordered stretches follow at residues 877–1312 (ADSW…SPLF), 1351–1370 (SSSS…TSLH), 1410–1468 (LSES…SAMS), 1650–1778 (GALN…KRQN), 1850–1881 (DRLK…SRQS), and 2360–2385 (SSTQ…ESTL). Over residues 882–895 (DSSSVSSGLSDTLD) the composition is skewed to low complexity. A compositionally biased stretch (polar residues) spans 896–925 (NISTDDLNTTSSVSSYSNITVPSRKNTQLR). Residues 942–959 (EELKKPEEDFDSHGDAGG) are compositionally biased toward basic and acidic residues. The segment covering 979–988 (ASLSVSQTGS) has biased composition (polar residues). Basic and acidic residues predominate over residues 1014–1026 (GKTDDAKASEKGK). 2 stretches are compositionally biased toward low complexity: residues 1074–1092 (GSSA…GSAT) and 1157–1170 (SSTS…SSKS). The span at 1187-1196 (GRSSPVTVNQ) shows a compositional bias: polar residues. 2 stretches are compositionally biased toward low complexity: residues 1206–1226 (VSDS…TSAS) and 1253–1263 (GAKAGGKSASA). Positions 1264–1289 (PNTEGVKSSSVMPSPSTTLARQGSLE) are enriched in polar residues. The segment covering 1296 to 1305 (GSMGSAGGLS) has biased composition (gly residues). Basic and acidic residues predominate over residues 1436–1445 (NQEEGKEWLR). Positions 1446-1462 (SHSTGGLQDTGNQSPLV) are enriched in polar residues. S1459 and S1463 each carry phosphoserine. Positions 1562–1653 (AEEKAHSEQI…AQAAIQGALN (92 aa)) form a coiled coil. Positions 1672–1689 (SVSSINSATSHSSIGSGN) are enriched in low complexity. Over residues 1701–1714 (WVNSRGSELRSSFK) the composition is skewed to polar residues. The stretch at 1794–1861 (EAEAEIILQL…LKAETGNTAK (68 aa)) forms a coiled coil. Residues 1867 to 1881 (SESSSSTSSSSSRQS) are compositionally biased toward low complexity.

The protein belongs to the Nav/unc-53 family. Highly expressed in brain. Expressed at low levels in heart and placenta. Present in activated T-cells but not in resting T-cells (at protein level). Down-regulated in primary neuroblastoma.

It localises to the nucleus outer membrane. Functionally, plays a role in cell migration. May be involved in neuron regeneration. May regulate IL2 production by T-cells. This chain is Neuron navigator 3 (NAV3), found in Homo sapiens (Human).